The chain runs to 625 residues: Glutamine--fructose-6-phosphate aminotransferase [isomerizing] (625 aa).

C2 (nucleophile; for GATase activity) is an active-site residue. Positions 2–229 (CGLVGYVGQR…QDQAVVITAD (228 aa)) constitute a Glutamine amidotransferase type-2 domain. 2 SIS domains span residues 298–437 (SDQE…ARGT) and 470–615 (LAYR…VDKP). The For Fru-6P isomerization activity role is filled by K620.

In terms of assembly, homodimer.

It localises to the cytoplasm. The catalysed reaction is D-fructose 6-phosphate + L-glutamine = D-glucosamine 6-phosphate + L-glutamate. Functionally, catalyzes the first step in hexosamine metabolism, converting fructose-6P into glucosamine-6P using glutamine as a nitrogen source. The chain is Glutamine--fructose-6-phosphate aminotransferase [isomerizing] from Mycobacterium leprae (strain TN).